Here is a 165-residue protein sequence, read N- to C-terminus: NADPH-dependent 7-cyano-7-deazaguanine reductase (165 aa).

Catalysis depends on cysteine 56, which acts as the Thioimide intermediate. Aspartate 63 functions as the Proton donor in the catalytic mechanism. Residues 78–80 (VES) and 97–98 (HE) each bind substrate.

Belongs to the GTP cyclohydrolase I family. QueF type 1 subfamily.

It localises to the cytoplasm. The enzyme catalyses 7-aminomethyl-7-carbaguanine + 2 NADP(+) = 7-cyano-7-deazaguanine + 2 NADPH + 3 H(+). It functions in the pathway tRNA modification; tRNA-queuosine biosynthesis. Its function is as follows. Catalyzes the NADPH-dependent reduction of 7-cyano-7-deazaguanine (preQ0) to 7-aminomethyl-7-deazaguanine (preQ1). The protein is NADPH-dependent 7-cyano-7-deazaguanine reductase of Bacillus cereus (strain ATCC 14579 / DSM 31 / CCUG 7414 / JCM 2152 / NBRC 15305 / NCIMB 9373 / NCTC 2599 / NRRL B-3711).